We begin with the raw amino-acid sequence, 519 residues long: Serine/threonine-protein kinase RIO1 (519 aa).

Over residues 1–10 the composition is skewed to pro residues; the sequence is MTPAPEPQDP. Residues 1–54 are disordered; the sequence is MTPAPEPQDPPTIHEPVATEQTDDISDWDVESDYEDGYGAPSKSQAQGGASAAD. Acidic residues predominate over residues 21 to 36; the sequence is QTDDISDWDVESDYED. The span at 39–53 shows a compositional bias: low complexity; it reads GAPSKSQAQGGASAA. A Protein kinase domain is found at 122–519; the sequence is SEIYGTISTG…KLVAANKKRK (398 aa). The ATP site is built by Lys-154 and Leu-228. Residue Asp-281 is the Proton acceptor of the active site. The Mg(2+) site is built by Asn-286 and Asp-298. The active-site 4-aspartylphosphate intermediate is Asp-298. Positions 418–519 are disordered; sequence ADSKVPESTG…KLVAANKKRK (102 aa). A compositionally biased stretch (acidic residues) spans 439 to 464; the sequence is GSEDEEGDEGESGEVESGDEEREEGE. The tract at residues 440–519 is association with (pre-)40S ribosomal particle; the sequence is SEDEEGDEGE…KLVAANKKRK (80 aa). Composition is skewed to basic residues over residues 470–489 and 497–519; these read KKRP…AHKM and EKRK…KKRK.

This sequence belongs to the protein kinase superfamily. RIO-type Ser/Thr kinase family. It depends on Mg(2+) as a cofactor. Autophosphorylated.

The protein resides in the cytoplasm. The enzyme catalyses L-seryl-[protein] + ATP = O-phospho-L-seryl-[protein] + ADP + H(+). The catalysed reaction is L-threonyl-[protein] + ATP = O-phospho-L-threonyl-[protein] + ADP + H(+). It catalyses the reaction ATP + H2O = ADP + phosphate + H(+). Involved in the final steps of cytoplasmic maturation of the 40S ribosomal subunit. In vitro, has strong ATPase activity and only low protein kinase activity. The sequence is that of Serine/threonine-protein kinase RIO1 from Chaetomium thermophilum (strain DSM 1495 / CBS 144.50 / IMI 039719) (Thermochaetoides thermophila).